The following is a 310-amino-acid chain: Cytosolic Fe-S cluster assembly factor Nubp1 homolog (310 aa).

Residues Cys9, Cys23, Cys26, and Cys32 each contribute to the [4Fe-4S] cluster site. ATP is bound at residue 63-70 (GKGGVGKS). [4Fe-4S] cluster contacts are provided by Cys240 and Cys243.

It belongs to the Mrp/NBP35 ATP-binding proteins family. NUBP1/NBP35 subfamily. As to quaternary structure, heterotetramer of 2 Nubp1 and 2 Nubp2 chains. It depends on [4Fe-4S] cluster as a cofactor.

It localises to the cytoplasm. In terms of biological role, component of the cytosolic iron-sulfur (Fe/S) protein assembly (CIA) machinery. Required for maturation of extramitochondrial Fe-S proteins. The Nubp1-Nubp2 heterotetramer forms a Fe-S scaffold complex, mediating the de novo assembly of an Fe-S cluster and its transfer to target apoproteins. The protein is Cytosolic Fe-S cluster assembly factor Nubp1 homolog of Drosophila mojavensis (Fruit fly).